We begin with the raw amino-acid sequence, 176 residues long: NAD(P)H-quinone oxidoreductase subunit 6, chloroplastic (176 aa).

5 helical membrane-spanning segments follow: residues Phe10–Thr30, Pro32–Leu52, Ala61–Met81, Val95–Ile115, and Phe152–Ser172.

This sequence belongs to the complex I subunit 6 family. In terms of assembly, NDH is composed of at least 16 different subunits, 5 of which are encoded in the nucleus.

The protein localises to the plastid. Its subcellular location is the chloroplast thylakoid membrane. It carries out the reaction a plastoquinone + NADH + (n+1) H(+)(in) = a plastoquinol + NAD(+) + n H(+)(out). The catalysed reaction is a plastoquinone + NADPH + (n+1) H(+)(in) = a plastoquinol + NADP(+) + n H(+)(out). NDH shuttles electrons from NAD(P)H:plastoquinone, via FMN and iron-sulfur (Fe-S) centers, to quinones in the photosynthetic chain and possibly in a chloroplast respiratory chain. The immediate electron acceptor for the enzyme in this species is believed to be plastoquinone. Couples the redox reaction to proton translocation, and thus conserves the redox energy in a proton gradient. The sequence is that of NAD(P)H-quinone oxidoreductase subunit 6, chloroplastic (ndhG) from Aethionema grandiflorum (Persian stone-cress).